A 122-amino-acid polypeptide reads, in one-letter code: Large ribosomal subunit protein uL14c (122 aa).

Belongs to the universal ribosomal protein uL14 family. Part of the 50S ribosomal subunit.

It is found in the plastid. It localises to the chloroplast. Binds to 23S rRNA. The sequence is that of Large ribosomal subunit protein uL14c from Populus trichocarpa (Western balsam poplar).